Reading from the N-terminus, the 150-residue chain is 3-dehydroquinate dehydratase (150 aa).

Tyr26 functions as the Proton acceptor in the catalytic mechanism. Substrate contacts are provided by Asn77, His83, and Asp90. His103 (proton donor) is an active-site residue. Substrate-binding positions include 104-105 and Arg114; that span reads LS.

Belongs to the type-II 3-dehydroquinase family. As to quaternary structure, homododecamer.

The catalysed reaction is 3-dehydroquinate = 3-dehydroshikimate + H2O. The protein operates within metabolic intermediate biosynthesis; chorismate biosynthesis; chorismate from D-erythrose 4-phosphate and phosphoenolpyruvate: step 3/7. Functionally, catalyzes a trans-dehydration via an enolate intermediate. The sequence is that of 3-dehydroquinate dehydratase from Photobacterium profundum (strain SS9).